We begin with the raw amino-acid sequence, 452 residues long: Probable ECA polymerase (452 aa).

The next 11 helical transmembrane spans lie at 6–26, 37–57, 63–83, 118–138, 155–175, 181–201, 207–227, 228–248, 341–361, 378–398, and 410–430; these read FSGL…LTWF, VFFS…TSVL, VGVA…CFYG, VILM…NGFL, GVAL…VYFL, AWLF…MIVG, IIIA…ISLW, MLAA…LKRY, LVVM…GLII, YKAA…IVLA, and VFFL…FWLF.

The protein belongs to the WzyE family. As to quaternary structure, probably part of a complex composed of WzxE, WzyE and WzzE.

The protein localises to the cell inner membrane. It participates in bacterial outer membrane biogenesis; enterobacterial common antigen biosynthesis. In terms of biological role, probably involved in the polymerization of enterobacterial common antigen (ECA) trisaccharide repeat units. The sequence is that of Probable ECA polymerase from Salmonella arizonae (strain ATCC BAA-731 / CDC346-86 / RSK2980).